A 339-amino-acid chain; its full sequence is Phenylalanine--tRNA ligase alpha subunit (339 aa).

A Mg(2+)-binding site is contributed by Glu-254.

Belongs to the class-II aminoacyl-tRNA synthetase family. Phe-tRNA synthetase alpha subunit type 1 subfamily. Tetramer of two alpha and two beta subunits. Mg(2+) is required as a cofactor.

It localises to the cytoplasm. The catalysed reaction is tRNA(Phe) + L-phenylalanine + ATP = L-phenylalanyl-tRNA(Phe) + AMP + diphosphate + H(+). The polypeptide is Phenylalanine--tRNA ligase alpha subunit (Desulforudis audaxviator (strain MP104C)).